A 495-amino-acid polypeptide reads, in one-letter code: Galactose-1-phosphate uridylyltransferase (495 aa).

The protein belongs to the galactose-1-phosphate uridylyltransferase type 2 family.

Its subcellular location is the cytoplasm. The catalysed reaction is alpha-D-galactose 1-phosphate + UDP-alpha-D-glucose = alpha-D-glucose 1-phosphate + UDP-alpha-D-galactose. The protein operates within carbohydrate metabolism; galactose metabolism. The chain is Galactose-1-phosphate uridylyltransferase from Ligilactobacillus salivarius (strain UCC118) (Lactobacillus salivarius).